A 151-amino-acid chain; its full sequence is Deoxyuridine 5'-triphosphate nucleotidohydrolase (151 aa).

Residues 70-72 (RSG), N83, 87-89 (LID), and M97 contribute to the substrate site.

The protein belongs to the dUTPase family. Mg(2+) serves as cofactor.

The catalysed reaction is dUTP + H2O = dUMP + diphosphate + H(+). It functions in the pathway pyrimidine metabolism; dUMP biosynthesis; dUMP from dCTP (dUTP route): step 2/2. Functionally, this enzyme is involved in nucleotide metabolism: it produces dUMP, the immediate precursor of thymidine nucleotides and it decreases the intracellular concentration of dUTP so that uracil cannot be incorporated into DNA. This is Deoxyuridine 5'-triphosphate nucleotidohydrolase from Hamiltonella defensa subsp. Acyrthosiphon pisum (strain 5AT).